We begin with the raw amino-acid sequence, 402 residues long: Protein DesVIII (402 aa).

This sequence belongs to the cytochrome P450 family. Forms a complex with DesVII.

It functions in the pathway antibiotic biosynthesis. In terms of biological role, involved in the biosynthesis of the macrolide antibiotics methymycin, neomethymycin, narbomycin, and pikromycin. DesVIII assists the folding of the DesVII polypeptide. However, unlike chaperones, it remains bound to DesVII during catalysis, forming a tight DesVII/DesVIII complex. Although the formation of the DesVII/DesVIII complex is essential for the catalytic activity, DesVIII is unlikely to be involved in catalysis directly. This is Protein DesVIII from Streptomyces venezuelae.